A 152-amino-acid polypeptide reads, in one-letter code: MESWLFLIGIFIVALLGKNQSLIIASIVVLFLKLIPYSDKIFPLLNKQGINWGVTIISITILVPIATGKIGFMDLVNSFKSPVGWIAVACGILVSLLSYQGVGFLSASPEVTVALVMGTIIGVVFMNGIAAGPIIASGIAYLIIQLLQIQIK.

The next 4 helical transmembrane spans lie at 4 to 24 (WLFLIGIFIVALLGKNQSLII), 52 to 72 (WGVTIISITILVPIATGKIGF), 85 to 105 (WIAVACGILVSLLSYQGVGFL), and 115 to 135 (LVMGTIIGVVFMNGIAAGPII).

Belongs to the UPF0756 family.

Its subcellular location is the cell membrane. This is UPF0756 membrane protein PEPE_1090 from Pediococcus pentosaceus (strain ATCC 25745 / CCUG 21536 / LMG 10740 / 183-1w).